The sequence spans 298 residues: Nucleoid occlusion protein (298 aa).

Residues 152-171 (EALAQRLGKGQSTVANKLRL) constitute a DNA-binding region (H-T-H motif).

The protein belongs to the ParB family.

It localises to the cytoplasm. Its subcellular location is the nucleoid. Effects nucleoid occlusion by binding relatively nonspecifically to DNA and preventing the assembly of the division machinery in the vicinity of the nucleoid, especially under conditions that disturb the cell cycle. It helps to coordinate cell division and chromosome segregation by preventing the formation of the Z ring through the nucleoid, which would cause chromosome breakage. The protein is Nucleoid occlusion protein of Lysinibacillus sphaericus (strain C3-41).